Reading from the N-terminus, the 161-residue chain is RNA pyrophosphohydrolase (161 aa).

In terms of domain architecture, Nudix hydrolase spans 12–154; it reads PYRPGVGMMI…KRKLYQAVVK (143 aa). A Nudix box motif is present at residues 46-67; it reads GGIVPGETPSIAAMREMLEEIG.

This sequence belongs to the Nudix hydrolase family. RppH subfamily. A divalent metal cation is required as a cofactor.

Functionally, accelerates the degradation of transcripts by removing pyrophosphate from the 5'-end of triphosphorylated RNA, leading to a more labile monophosphorylated state that can stimulate subsequent ribonuclease cleavage. The polypeptide is RNA pyrophosphohydrolase (Rickettsia bellii (strain OSU 85-389)).